The primary structure comprises 154 residues: Urease accessory protein UreE (154 aa).

It belongs to the UreE family.

It is found in the cytoplasm. Involved in urease metallocenter assembly. Binds nickel. Probably functions as a nickel donor during metallocenter assembly. In Escherichia coli O157:H7, this protein is Urease accessory protein UreE.